The following is a 383-amino-acid chain: Probable L-tyrosine/L-aspartate decarboxylase (383 aa).

Lysine 227 bears the N6-(pyridoxal phosphate)lysine mark.

This sequence belongs to the group II decarboxylase family. MfnA subfamily. Pyridoxal 5'-phosphate serves as cofactor.

It catalyses the reaction L-tyrosine + H(+) = tyramine + CO2. It carries out the reaction L-aspartate + H(+) = beta-alanine + CO2. It functions in the pathway cofactor biosynthesis; methanofuran biosynthesis. The protein operates within cofactor biosynthesis; coenzyme A biosynthesis. Catalyzes the decarboxylation of L-tyrosine to produce tyramine for methanofuran biosynthesis. Can also catalyze the decarboxylation of L-aspartate to produce beta-alanine for coenzyme A (CoA) biosynthesis. This chain is Probable L-tyrosine/L-aspartate decarboxylase, found in Methanothrix thermoacetophila (strain DSM 6194 / JCM 14653 / NBRC 101360 / PT) (Methanosaeta thermophila).